A 59-amino-acid chain; its full sequence is Large ribosomal subunit protein bL32c (59 aa).

Positions 37 to 59 are disordered; the sequence is SRSFSSGNEHPKPKGFSGQQANK.

This sequence belongs to the bacterial ribosomal protein bL32 family.

It is found in the plastid. Its subcellular location is the chloroplast. The protein is Large ribosomal subunit protein bL32c of Saccharum hybrid (Sugarcane).